The sequence spans 169 residues: Protein pid-1 (169 aa).

Residues 137 to 151 (SGSPRITPQKHTPVS) are compositionally biased toward polar residues. Residues 137-169 (SGSPRITPQKHTPVSANHKPARSIFDDIPSNIA) form a disordered region.

Component of the pid-1 variant of the PETISCO complex (also called the pid-3, erh-2, tofu-6, and ife-3 small RNA complex) containing at least pid-1, tofu-6, ife-3, pid-3, and erh-2, which is required for the biogenesis of a class of 21 nucleotide PIWI-interacting RNAs (piRNAs) that possess a uracil residue at the 5'-end (also called 21U-RNAs). Within the complex interacts with pid-3; the interaction is direct. Within the complex interacts with erh-2. Within the complex interacts with tofu-6. As to expression, expressed predominantly in the germline (at protein level).

Its subcellular location is the cytoplasm. It localises to the nucleus. It is found in the perinuclear region. Functionally, component of the pid-1 variant of the PETISCO complex which is required for the biogenesis of a class of 21 nucleotide PIWI-interacting RNAs (piRNAs) that possess a uracil residue at the 5'-end (also called 21U-RNAs). Within the complex acts as an adapter which binds to the complex via erh-2. Involved in the biogenesis of 21U-RNAs which guide the piwi protein prg-1 to its DNA targets for silencing. Plays a role in small RNA-directed transgenerational epigenetic inheritance. This Caenorhabditis elegans protein is Protein pid-1.